Here is a 341-residue protein sequence, read N- to C-terminus: RNA 3'-terminal phosphate cyclase (341 aa).

Residues Gln102 and 283–287 (HLADQ) each bind ATP. His308 functions as the Tele-AMP-histidine intermediate in the catalytic mechanism.

This sequence belongs to the RNA 3'-terminal cyclase family. Type 1 subfamily.

The protein localises to the cytoplasm. The catalysed reaction is a 3'-end 3'-phospho-ribonucleotide-RNA + ATP = a 3'-end 2',3'-cyclophospho-ribonucleotide-RNA + AMP + diphosphate. Functionally, catalyzes the conversion of 3'-phosphate to a 2',3'-cyclic phosphodiester at the end of RNA. The mechanism of action of the enzyme occurs in 3 steps: (A) adenylation of the enzyme by ATP; (B) transfer of adenylate to an RNA-N3'P to produce RNA-N3'PP5'A; (C) and attack of the adjacent 2'-hydroxyl on the 3'-phosphorus in the diester linkage to produce the cyclic end product. The biological role of this enzyme is unknown but it is likely to function in some aspects of cellular RNA processing. This Pseudomonas aeruginosa (strain UCBPP-PA14) protein is RNA 3'-terminal phosphate cyclase.